A 517-amino-acid polypeptide reads, in one-letter code: Crotonobetaine/carnitine--CoA ligase (517 aa).

The protein belongs to the ATP-dependent AMP-binding enzyme family.

It catalyses the reaction 4-(trimethylamino)butanoate + ATP + CoA = 4-(trimethylamino)butanoyl-CoA + AMP + diphosphate. It carries out the reaction crotonobetaine + ATP + CoA = crotonobetainyl-CoA + AMP + diphosphate. The catalysed reaction is (R)-carnitine + ATP + CoA = (R)-carnitinyl-CoA + AMP + diphosphate. The protein operates within amine and polyamine metabolism; carnitine metabolism. Catalyzes the transfer of CoA to carnitine, generating the initial carnitinyl-CoA needed for the CaiB reaction cycle. Also has activity toward crotonobetaine and gamma-butyrobetaine. The chain is Crotonobetaine/carnitine--CoA ligase from Shigella sonnei (strain Ss046).